Reading from the N-terminus, the 257-residue chain is Imidazole glycerol phosphate synthase subunit HisF (257 aa).

Residues Asp-11 and Asp-130 contribute to the active site.

Belongs to the HisA/HisF family. As to quaternary structure, heterodimer of HisH and HisF.

The protein localises to the cytoplasm. The enzyme catalyses 5-[(5-phospho-1-deoxy-D-ribulos-1-ylimino)methylamino]-1-(5-phospho-beta-D-ribosyl)imidazole-4-carboxamide + L-glutamine = D-erythro-1-(imidazol-4-yl)glycerol 3-phosphate + 5-amino-1-(5-phospho-beta-D-ribosyl)imidazole-4-carboxamide + L-glutamate + H(+). It functions in the pathway amino-acid biosynthesis; L-histidine biosynthesis; L-histidine from 5-phospho-alpha-D-ribose 1-diphosphate: step 5/9. Functionally, IGPS catalyzes the conversion of PRFAR and glutamine to IGP, AICAR and glutamate. The HisF subunit catalyzes the cyclization activity that produces IGP and AICAR from PRFAR using the ammonia provided by the HisH subunit. This chain is Imidazole glycerol phosphate synthase subunit HisF, found in Pseudoalteromonas atlantica (strain T6c / ATCC BAA-1087).